Here is a 222-residue protein sequence, read N- to C-terminus: Small ribosomal subunit protein uS3 (222 aa).

A KH type-2 domain is found at 39–108; sequence IRKFIKKELF…NVLINIVEVK (70 aa).

Belongs to the universal ribosomal protein uS3 family. In terms of assembly, part of the 30S ribosomal subunit. Forms a tight complex with proteins S10 and S14.

Its function is as follows. Binds the lower part of the 30S subunit head. Binds mRNA in the 70S ribosome, positioning it for translation. This Clostridium perfringens (strain ATCC 13124 / DSM 756 / JCM 1290 / NCIMB 6125 / NCTC 8237 / Type A) protein is Small ribosomal subunit protein uS3.